Consider the following 230-residue polypeptide: Type II restriction enzyme Eco47I (230 aa).

The enzyme catalyses Endonucleolytic cleavage of DNA to give specific double-stranded fragments with terminal 5'-phosphates.. Its function is as follows. A P subtype restriction enzyme that recognizes the double-stranded sequence 5'-GGWCC-3' and cleaves after G-1. This chain is Type II restriction enzyme Eco47I, found in Escherichia coli.